Consider the following 44-residue polypeptide: Brevinin-1PLa (44 aa).

The propeptide occupies 1-18 (NAEEERRDEPDETDVEVE). A disulfide bridge connects residues Cys-38 and Cys-44.

In terms of tissue distribution, expressed by the skin glands.

Its subcellular location is the secreted. Its function is as follows. Antimicrobial peptide. The polypeptide is Brevinin-1PLa (Lithobates palustris (Pickerel frog)).